Consider the following 166-residue polypeptide: UPF0336 protein ML2425 (166 aa).

Residues 10–131 (LIGKHYRQLD…VIAEVRSEVT (122 aa)) enclose the MaoC-like domain.

It belongs to the UPF0336 family.

The protein is UPF0336 protein ML2425 of Mycobacterium leprae (strain TN).